We begin with the raw amino-acid sequence, 804 residues long: Leucine--tRNA ligase (804 aa).

The 'HIGH' region motif lies at 40 to 51; sequence PYPSGAGLHVGH. The 'KMSKS' region signature appears at 574 to 578; that stretch reads KMSKS. Lys577 serves as a coordination point for ATP.

It belongs to the class-I aminoacyl-tRNA synthetase family.

The protein localises to the cytoplasm. It catalyses the reaction tRNA(Leu) + L-leucine + ATP = L-leucyl-tRNA(Leu) + AMP + diphosphate. The protein is Leucine--tRNA ligase of Shouchella clausii (strain KSM-K16) (Alkalihalobacillus clausii).